The chain runs to 299 residues: MQLHKPVLLKDVIENLEINPEGIYVDLTLGYAGHSSEILKKLSSKGKLIGFDQDSFAIEKSRQRLSQISDNFVLINDNFVNFKVYLDKMNISFVDGFLLDLGVSSVQLDFAHRGFSYSKLGPLDMRMNLDQPLKADDIVNGYDQESLCKIFIENADVKLAKQVAKGIVNNRPIKDTLELVEVIRSSLPAALVRKKNPAKAVFQAIRIAVNDELIVLKKFLAQSLDFLKKDSKMLIITFHSIEDRIVKDFFKRQVKNKHDRRLPIMEQKDYQVKTIKPTEEEIAQNRRAKSSKLRIIKKL.

S-adenosyl-L-methionine is bound by residues 32–34 (AGH), Asp-52, Phe-79, Asp-100, and Gln-107.

Belongs to the methyltransferase superfamily. RsmH family.

The protein localises to the cytoplasm. The enzyme catalyses cytidine(1402) in 16S rRNA + S-adenosyl-L-methionine = N(4)-methylcytidine(1402) in 16S rRNA + S-adenosyl-L-homocysteine + H(+). Its function is as follows. Specifically methylates the N4 position of cytidine in position 1402 (C1402) of 16S rRNA. The sequence is that of Ribosomal RNA small subunit methyltransferase H from Mycoplasmopsis pulmonis (strain UAB CTIP) (Mycoplasma pulmonis).